We begin with the raw amino-acid sequence, 22 residues long: uncharacterized protein (22 aa).

Residues 1–22 (MHNSIAYDKDGNSTGQKYYAYG) form a disordered region.

This is an uncharacterized protein from Lactobacillus helveticus (Lactobacillus suntoryeus).